A 587-amino-acid polypeptide reads, in one-letter code: Glutamine--tRNA ligase (587 aa).

Positions 58–68 match the 'HIGH' region motif; the sequence is PEPNGYLHIGH. Residues 59-61 and 65-71 contribute to the ATP site; these read EPN and HIGHAKS. 2 residues coordinate L-glutamine: D91 and Y240. ATP-binding positions include T259 and 294 to 295; that span reads RL. The 'KMSKS' region motif lies at 301 to 305; the sequence is VTSKR.

Belongs to the class-I aminoacyl-tRNA synthetase family. As to quaternary structure, monomer.

It localises to the cytoplasm. It carries out the reaction tRNA(Gln) + L-glutamine + ATP = L-glutaminyl-tRNA(Gln) + AMP + diphosphate. In Bordetella bronchiseptica (strain ATCC BAA-588 / NCTC 13252 / RB50) (Alcaligenes bronchisepticus), this protein is Glutamine--tRNA ligase.